The following is a 700-amino-acid chain: Beta-galactosidase BgaB (700 aa).

Residues R122 and N160 each contribute to the substrate site. E161 (proton donor) is an active-site residue. E320 serves as the catalytic Nucleophile. Substrate contacts are provided by residues W328 and 368–371 (EAFH).

This sequence belongs to the glycosyl hydrolase 42 family. As to quaternary structure, trimer. Tetramer. Post-translationally, the N-terminus is blocked.

It catalyses the reaction Hydrolysis of terminal non-reducing beta-D-galactose residues in beta-D-galactosides.. With respect to regulation, inhibited by high substrate concentrations (100 mg/ml). No effect on activity with various EDTA concentrations (0-1 mM). 20-fold higher activity when cells grown on TOS than when cells grown on galactose, glucose and lactose. In terms of biological role, involved in the hydrolysis of transgalactooligosaccharides (TOS). Highly active towards Gal(beta1-4)Gal and Gal(beta1-4)-Gal-containing oligosaccharides. Low activity towards Gal(beta1-3)Gal, lactose and Gal(beta1-3)GalOMe. No activity towards Gal(beta1-6)Gal, Gal(beta1-4)Man, Gal(alpha1-4)Gal, Gal(alpha1-3)Gal(beta1-4)Gal, lactulose, 3'fucosyllactose, lacto-N-fucopentaose I, lacto-N-fucopentaose II, cellobiose, maltose or sucrose. No transglycosylation activity is found at high substrate concentrations (100 mg/ml) and only low transglycosylation activity at lower substrate concentrations (10 mg/ml). The sequence is that of Beta-galactosidase BgaB (bgaB) from Bifidobacterium adolescentis (strain ATCC 15703 / DSM 20083 / NCTC 11814 / E194a).